The chain runs to 96 residues: U-stichotoxin-Hau2b (96 aa).

Positions 1–18 are cleaved as a signal peptide; that stretch reads MKPIFIVALLFSTCLVNA. Propeptides lie at residues 19–29 and 30–33; these read KPSIDDAEMKR and EPKP. Cystine bridges form between Cys-40–Cys-51 and Cys-43–Cys-58. 2 propeptides span residues 62–64 and 65–68; these read RKR and EPKP. 2 cysteine pairs are disulfide-bonded: Cys-75–Cys-86 and Cys-78–Cys-93.

Belongs to the sea anemone BBH family.

Its subcellular location is the secreted. It is found in the nematocyst. Neurotoxin that paralyzes freshwater crabs at high concentration. The chain is U-stichotoxin-Hau2b from Heteractis aurora (Banded sea anemone).